Here is a 281-residue protein sequence, read N- to C-terminus: Acetyl-coenzyme A carboxylase carboxyl transferase subunit beta (281 aa).

The disordered stretch occupies residues 1–23 (MAWFKREKKGISTSTEEKKEAPD). In terms of domain architecture, CoA carboxyltransferase N-terminal spans 25-281 (LWNKCPNCKK…LAAFLKMMKN (257 aa)). Zn(2+) is bound by residues Cys29, Cys32, Cys48, and Cys51. The C4-type zinc finger occupies 29-51 (CPNCKKALHSADLLENKYVCQYC).

This sequence belongs to the AccD/PCCB family. As to quaternary structure, acetyl-CoA carboxylase is a heterohexamer composed of biotin carboxyl carrier protein (AccB), biotin carboxylase (AccC) and two subunits each of ACCase subunit alpha (AccA) and ACCase subunit beta (AccD). Zn(2+) serves as cofactor.

The protein resides in the cytoplasm. The enzyme catalyses N(6)-carboxybiotinyl-L-lysyl-[protein] + acetyl-CoA = N(6)-biotinyl-L-lysyl-[protein] + malonyl-CoA. It functions in the pathway lipid metabolism; malonyl-CoA biosynthesis; malonyl-CoA from acetyl-CoA: step 1/1. Its function is as follows. Component of the acetyl coenzyme A carboxylase (ACC) complex. Biotin carboxylase (BC) catalyzes the carboxylation of biotin on its carrier protein (BCCP) and then the CO(2) group is transferred by the transcarboxylase to acetyl-CoA to form malonyl-CoA. The sequence is that of Acetyl-coenzyme A carboxylase carboxyl transferase subunit beta from Pedobacter heparinus (strain ATCC 13125 / DSM 2366 / CIP 104194 / JCM 7457 / NBRC 12017 / NCIMB 9290 / NRRL B-14731 / HIM 762-3).